A 961-amino-acid polypeptide reads, in one-letter code: E4 ubiquitin-protein ligase UFD2 (961 aa).

The U-box domain occupies 880-954 (DVPDEFLDPL…LCFKKQKKEE (75 aa)).

The protein belongs to the ubiquitin conjugation factor E4 family. Interacts with CDC48. Interacts with the ubiquitin-like domain of RAD23 and DSK2. Interacts with PEX29.

The protein resides in the cytoplasm. The protein localises to the nucleus. It catalyses the reaction S-ubiquitinyl-[E2 ubiquitin-conjugating enzyme]-L-cysteine + [acceptor protein]-L-lysine = [E2 ubiquitin-conjugating enzyme]-L-cysteine + N(6)-ubiquitinyl-[acceptor protein]-L-lysine.. It participates in protein modification; protein ubiquitination. In terms of biological role, E4 ubiquitin chain-elongation enzyme specifically involved in polyubiquitin chain assembly. Binds to CDC48 and elongates mono- and diubiquitinated ERAD substrates presented by the UFD1-NPL4-CDC48/p97 (UNC) AAA ATPase complex to a chain length of 4 to 6 ubiquitin moieties. Delivers these polyubiquitinated substrates to RAD23 and DSK2, which target them to the proteasome. Has E3 ubiquitin-protein ligase activity, accepting ubiquitin from its cognate E2 ubiquitin-conjugating enzyme UBC4. Enhances ubiquitination at 'Lys-48', but not at 'Lys-29' of the Ub moiety. Promotes ubiquitin chain elongation at 'Lys-48' on the DOA10 substrate PEX29. Also involved in the proteolytic processing of the ER-bound transcription factor SPT23. The sequence is that of E4 ubiquitin-protein ligase UFD2 (UFD2) from Saccharomyces cerevisiae (strain ATCC 204508 / S288c) (Baker's yeast).